A 357-amino-acid chain; its full sequence is Protein-glutamate methylesterase/protein-glutamine glutaminase 1 (357 aa).

A Response regulatory domain is found at 10-127; sequence RTLIVDDSAF…DVNKIEKELV (118 aa). 4-aspartylphosphate is present on Asp-61. Residues 159-353 form the CheB-type methylesterase domain; sequence SCAGDFAVLI…EEIVRMSEVK (195 aa). Residues Ser-171, His-198, and Asp-295 contribute to the active site.

The protein belongs to the CheB family. In terms of processing, phosphorylated by CheA. Phosphorylation of the N-terminal regulatory domain activates the methylesterase activity.

It is found in the cytoplasm. The enzyme catalyses [protein]-L-glutamate 5-O-methyl ester + H2O = L-glutamyl-[protein] + methanol + H(+). It carries out the reaction L-glutaminyl-[protein] + H2O = L-glutamyl-[protein] + NH4(+). Involved in chemotaxis. Part of a chemotaxis signal transduction system that modulates chemotaxis in response to various stimuli. Catalyzes the demethylation of specific methylglutamate residues introduced into the chemoreceptors (methyl-accepting chemotaxis proteins or MCP) by CheR. Also mediates the irreversible deamidation of specific glutamine residues to glutamic acid. The sequence is that of Protein-glutamate methylesterase/protein-glutamine glutaminase 1 from Methanosarcina mazei (strain ATCC BAA-159 / DSM 3647 / Goe1 / Go1 / JCM 11833 / OCM 88) (Methanosarcina frisia).